A 416-amino-acid polypeptide reads, in one-letter code: UDP-N-acetylmuramoylalanine--D-glutamate ligase (416 aa).

104 to 110 contacts ATP; that stretch reads GSNGKST.

Belongs to the MurCDEF family.

The protein resides in the cytoplasm. It carries out the reaction UDP-N-acetyl-alpha-D-muramoyl-L-alanine + D-glutamate + ATP = UDP-N-acetyl-alpha-D-muramoyl-L-alanyl-D-glutamate + ADP + phosphate + H(+). It participates in cell wall biogenesis; peptidoglycan biosynthesis. Functionally, cell wall formation. Catalyzes the addition of glutamate to the nucleotide precursor UDP-N-acetylmuramoyl-L-alanine (UMA). This is UDP-N-acetylmuramoylalanine--D-glutamate ligase from Francisella tularensis subsp. mediasiatica (strain FSC147).